We begin with the raw amino-acid sequence, 468 residues long: Argininosuccinate lyase (468 aa).

Belongs to the lyase 1 family. Argininosuccinate lyase subfamily.

It is found in the cytoplasm. The catalysed reaction is 2-(N(omega)-L-arginino)succinate = fumarate + L-arginine. It functions in the pathway amino-acid biosynthesis; L-arginine biosynthesis; L-arginine from L-ornithine and carbamoyl phosphate: step 3/3. This is Argininosuccinate lyase from Sphingopyxis alaskensis (strain DSM 13593 / LMG 18877 / RB2256) (Sphingomonas alaskensis).